Reading from the N-terminus, the 415-residue chain is Lupus La protein homolog (415 aa).

Positions 7 to 99 (NEKMAALEAK…RRSPSRPLPE (93 aa)) constitute an HTH La-type RNA-binding domain. A phosphoserine mark is found at S92 and S94. Residues 111-187 (RSVYIKGFPT…TNLLILFKED (77 aa)) enclose the RRM domain. N6-acetyllysine is present on K116. T120 is subject to Phosphothreonine. Residues K128 and K327 each carry the N6-acetyllysine modification. The 118-residue stretch at 226-343 (EGKMGCLLKF…HAARRFKGSH (118 aa)) folds into the xRRM domain. The tract at residues 323–415 (ESLNKWKSKG…KKRENGARDK (93 aa)) is disordered. Residues 328 to 341 (WKSKGGHAARRFKG) are compositionally biased toward basic residues. At K356 the chain carries N6-acetyllysine. Phosphothreonine is present on T377. Basic and acidic residues predominate over residues 377–415 (TRFDDDDHRRGPVKRGIDGRDREEPASKHKKRENGARDK).

Interacts with DDX15. May interact with RUFY1. Phosphorylated.

It localises to the nucleus. Functionally, binds to the 3' poly(U) terminus of nascent RNA polymerase III transcripts, protecting them from exonuclease digestion and facilitating their folding and maturation. In Rattus norvegicus (Rat), this protein is Lupus La protein homolog (Ssb).